The chain runs to 570 residues: Sulfite reductase [NADPH] hemoprotein beta-component (570 aa).

[4Fe-4S] cluster contacts are provided by cysteine 434, cysteine 440, cysteine 479, and cysteine 483. Residue cysteine 483 coordinates siroheme.

The protein belongs to the nitrite and sulfite reductase 4Fe-4S domain family. Alpha(8)-beta(8). The alpha component is a flavoprotein, the beta component is a hemoprotein. The cofactor is siroheme. [4Fe-4S] cluster serves as cofactor.

The catalysed reaction is hydrogen sulfide + 3 NADP(+) + 3 H2O = sulfite + 3 NADPH + 4 H(+). It functions in the pathway sulfur metabolism; hydrogen sulfide biosynthesis; hydrogen sulfide from sulfite (NADPH route): step 1/1. Its function is as follows. Component of the sulfite reductase complex that catalyzes the 6-electron reduction of sulfite to sulfide. This is one of several activities required for the biosynthesis of L-cysteine from sulfate. In Escherichia coli (strain B / BL21-DE3), this protein is Sulfite reductase [NADPH] hemoprotein beta-component.